Consider the following 246-residue polypeptide: ABC transporter ATP-binding protein NatA (246 aa).

Residues 2-237 form the ABC transporter domain; it reads ITLTDCSRRF…ERSEDLNYIF (236 aa). 38–45 serves as a coordination point for ATP; that stretch reads GENGAGKT.

The protein belongs to the ABC transporter superfamily. The complex is composed of NatA and NatB.

The enzyme catalyses Na(+)(in) + ATP + H2O = Na(+)(out) + ADP + phosphate + H(+). Its function is as follows. Part of an ABC transporter that catalyzes ATP-dependent electrogenic sodium extrusion. This chain is ABC transporter ATP-binding protein NatA, found in Bacillus subtilis (strain 168).